We begin with the raw amino-acid sequence, 618 residues long: Probable Xaa-Pro aminopeptidase P (618 aa).

4 residues coordinate Mn(2+): Asp-414, Asp-425, Glu-523, and Glu-537.

The protein belongs to the peptidase M24B family. Mn(2+) is required as a cofactor.

It catalyses the reaction Release of any N-terminal amino acid, including proline, that is linked to proline, even from a dipeptide or tripeptide.. Its function is as follows. Catalyzes the removal of a penultimate prolyl residue from the N-termini of peptides. In Metarhizium robertsii (strain ARSEF 23 / ATCC MYA-3075) (Metarhizium anisopliae (strain ARSEF 23)), this protein is Probable Xaa-Pro aminopeptidase P (AMPP).